The chain runs to 350 residues: Methionine import ATP-binding protein MetN (350 aa).

The region spanning 9 to 245 (LKDVDVEFHG…PQQQLTKDFI (237 aa)) is the ABC transporter domain. 43–50 (GYSGAGKS) provides a ligand contact to ATP.

Belongs to the ABC transporter superfamily. Methionine importer (TC 3.A.1.24) family. The complex is composed of two ATP-binding proteins (MetN), two transmembrane proteins (MetI) and a solute-binding protein (MetQ).

The protein resides in the cell membrane. The enzyme catalyses L-methionine(out) + ATP + H2O = L-methionine(in) + ADP + phosphate + H(+). The catalysed reaction is D-methionine(out) + ATP + H2O = D-methionine(in) + ADP + phosphate + H(+). Part of the ABC transporter complex MetNIQ involved in methionine import. Responsible for energy coupling to the transport system. This Lacticaseibacillus paracasei (strain ATCC 334 / BCRC 17002 / CCUG 31169 / CIP 107868 / KCTC 3260 / NRRL B-441) (Lactobacillus paracasei) protein is Methionine import ATP-binding protein MetN.